Reading from the N-terminus, the 253-residue chain is 3-deoxy-manno-octulosonate cytidylyltransferase (253 aa).

Belongs to the KdsB family.

It localises to the cytoplasm. The catalysed reaction is 3-deoxy-alpha-D-manno-oct-2-ulosonate + CTP = CMP-3-deoxy-beta-D-manno-octulosonate + diphosphate. It functions in the pathway nucleotide-sugar biosynthesis; CMP-3-deoxy-D-manno-octulosonate biosynthesis; CMP-3-deoxy-D-manno-octulosonate from 3-deoxy-D-manno-octulosonate and CTP: step 1/1. It participates in bacterial outer membrane biogenesis; lipopolysaccharide biosynthesis. Functionally, activates KDO (a required 8-carbon sugar) for incorporation into bacterial lipopolysaccharide in Gram-negative bacteria. The polypeptide is 3-deoxy-manno-octulosonate cytidylyltransferase (Aeromonas hydrophila subsp. hydrophila (strain ATCC 7966 / DSM 30187 / BCRC 13018 / CCUG 14551 / JCM 1027 / KCTC 2358 / NCIMB 9240 / NCTC 8049)).